The chain runs to 82 residues: Consomatin Mao1 (82 aa).

The signal sequence occupies residues 1 to 22 (MQTASWVMVMMMVWITAPLSEG). Positions 23–57 (GKLNDVIRGLVPDDVTPQLILRSLFFHRPSDSVVR) are excised as a propeptide. Cys-65 and Cys-70 form a disulfide bridge. Residue Trp-67 is modified to D-tryptophan. 4-hydroxyproline occurs at positions 71, 72, and 74. Residues 75-82 (WRRPNGKG) constitute a propeptide that is removed on maturation.

It belongs to the conotoxin C superfamily. Consomatin family. In terms of tissue distribution, expressed by the venom duct.

It is found in the secreted. Its function is as follows. Moderately activates human somatostatin receptors (SSTR) with a preferential activation of SSTR1 and SSTR4. In vivo, does not cause behavioral changes in mice within a few minutes of intracranial injection, but causes a progressive loss of movement thereafter. Four to five hours after injection, mice recover, even with the highest dose tested. Shows antinociception and antihyperalgesia activities in two mouse models of acute pain, most probably by acting outside the central nervous system. The polypeptide is Consomatin Mao1 (Conus maioensis (Sea snail)).